The following is a 124-amino-acid chain: WAP four-disulfide core domain protein 2 (124 aa).

The signal sequence occupies residues 1 to 27; that stretch reads MPACRPGPLAGALLLGLLLLGLPRVPG. WAP domains lie at 29–73 and 74–123; these read EVEK…CHLP and NEKE…VTPI. Disulfide bonds link cysteine 36-cysteine 62, cysteine 45-cysteine 66, cysteine 49-cysteine 61, cysteine 55-cysteine 70, cysteine 80-cysteine 110, cysteine 93-cysteine 114, cysteine 97-cysteine 109, and cysteine 103-cysteine 119. A glycan (N-linked (GlcNAc...) asparagine) is linked at asparagine 44.

Homotrimer; disulfide-linked. Epididymis. Highest levels are found in the caput and proximal cauda regions. Lower levels in the distal cauda. Not detected in the efferent ducts.

It localises to the secreted. Broad range protease inhibitor. Possible function in sperm maturation. The chain is WAP four-disulfide core domain protein 2 (WFDC2) from Canis lupus familiaris (Dog).